The following is a 362-amino-acid chain: Snurportin-1 (362 aa).

N-acetylmethionine is present on M1. Disordered stretches follow at residues 1 to 40 and 69 to 90; these read MEELSQALAGSFSVSQDLNSTAAPHPRLSQYKSKYSSLEQ and DWTGMESEEEEEKKDDEEMDVD. A necessary for interaction with KPNB1 and m3G-cap U1 and U5 snRNP import receptor activity region spans residues 1–65; that stretch reads MEELSQALAG…LDYVNHARRL (65 aa). Residues 1 to 160 are necessary for interaction with XPO1; the sequence is MEELSQALAG…NTFPSLLPGG (160 aa). The region spanning 11–73 is the IBB domain; that stretch reads SFSVSQDLNS…RLAEDDWTGM (63 aa). Residues 12 to 22 show a composition bias toward polar residues; sequence FSVSQDLNSTA. A compositionally biased stretch (acidic residues) spans 69–89; it reads DWTGMESEEEEEKKDDEEMDV. S75 is subject to Phosphoserine. Positions 128–130 are interaction with m3G-cap structure; it reads GKR. The necessary for binding to the m3G-cap structure stretch occupies residues 210-330; sequence LHSKLPEEEG…GIMGKLTPRA (121 aa). Positions 319–362 are disordered; sequence KEGIMGKLTPRASENGHYELEHLSTPKLKSPPQRPNHPESLMEN. The span at 332–342 shows a compositional bias: basic and acidic residues; that stretch reads ENGHYELEHLS.

It belongs to the snurportin family. In terms of assembly, component of an import snRNP complex composed of KPNB1, SNUPN, SMN1 and ZNF259. Component of a nuclear export receptor complex composed of KPNB1, Ran, SNUPN and XPO1. Found in a trimeric export complex with SNUPN, Ran and XPO1. Interacts (via IBB domain) with KPNB1; the interaction is direct. Interacts with DDX20, IPO7, SMN1, SNRPB and XPO1. Interacts directly with XPO1. Its interaction with XPO1 and binding to m3G-cap U snRNPs appears to be mutually exclusive. Can form homomers.

The protein resides in the nucleus. It localises to the cytoplasm. In terms of biological role, functions as an U snRNP-specific nuclear import adapter. Involved in the trimethylguanosine (m3G)-cap-dependent nuclear import of U snRNPs. Binds specifically to the terminal m3G-cap U snRNAs. The polypeptide is Snurportin-1 (SNUPN) (Bos taurus (Bovine)).